An 85-amino-acid polypeptide reads, in one-letter code: Large ribosomal subunit protein bL27 (85 aa).

A disordered region spans residues methionine 1 to glycine 22.

This sequence belongs to the bacterial ribosomal protein bL27 family.

This chain is Large ribosomal subunit protein bL27, found in Sulfurimonas denitrificans (strain ATCC 33889 / DSM 1251) (Thiomicrospira denitrificans (strain ATCC 33889 / DSM 1251)).